The following is a 149-amino-acid chain: Macrodomain Ter protein (149 aa).

The protein belongs to the MatP family. As to quaternary structure, homodimer.

It is found in the cytoplasm. Its function is as follows. Required for spatial organization of the terminus region of the chromosome (Ter macrodomain) during the cell cycle. Prevents early segregation of duplicated Ter macrodomains during cell division. Binds specifically to matS, which is a 13 bp signature motif repeated within the Ter macrodomain. The protein is Macrodomain Ter protein of Vibrio parahaemolyticus serotype O3:K6 (strain RIMD 2210633).